Reading from the N-terminus, the 403-residue chain is Homoserine O-succinyltransferase (403 aa).

The tract at residues 1 to 31 (MTELQVDPAASADPAAAADTPRHPAATLPPD) is disordered. Positions 7–26 (DPAASADPAAAADTPRHPAA) are enriched in low complexity. Positions 74 to 383 (NAVLICHALN…HGHDAFLLED (310 aa)) constitute an AB hydrolase-1 domain. Ser178 serves as the catalytic Nucleophile. Substrate is bound at residue Arg248. Catalysis depends on residues Asp343 and His376. Asp377 serves as a coordination point for substrate.

This sequence belongs to the AB hydrolase superfamily. MetX family. Homodimer.

It is found in the cytoplasm. It catalyses the reaction L-homoserine + succinyl-CoA = O-succinyl-L-homoserine + CoA. The protein operates within amino-acid biosynthesis; L-methionine biosynthesis via de novo pathway; O-succinyl-L-homoserine from L-homoserine: step 1/1. Its function is as follows. Transfers a succinyl group from succinyl-CoA to L-homoserine, forming succinyl-L-homoserine. This chain is Homoserine O-succinyltransferase, found in Ralstonia nicotianae (strain ATCC BAA-1114 / GMI1000) (Ralstonia solanacearum).